We begin with the raw amino-acid sequence, 616 residues long: Probable galacturonosyltransferase 4 (616 aa).

The Cytoplasmic segment spans residues 1–6 (MMVKLR). A helical; Signal-anchor for type II membrane protein transmembrane segment spans residues 7-29 (NLVLFFMLLTVVAHILLYTDPAA). At 30-616 (SFKTPFSKRD…VYLRECNINP (587 aa)) the chain is on the lumenal side. The interval 132-152 (QTSEKVDEQPEPNAFGAKKDT) is disordered. Asparagine 291, asparagine 326, asparagine 378, asparagine 481, and asparagine 514 each carry an N-linked (GlcNAc...) asparagine glycan.

This sequence belongs to the glycosyltransferase 8 family. In terms of tissue distribution, expressed in roots, inflorescences, siliques, leaves and stems.

It localises to the golgi apparatus membrane. It functions in the pathway glycan metabolism; pectin biosynthesis. Its function is as follows. May be involved in pectin and/or xylans biosynthesis in cell walls. The polypeptide is Probable galacturonosyltransferase 4 (GAUT4) (Arabidopsis thaliana (Mouse-ear cress)).